Consider the following 395-residue polypeptide: Elongation factor Tu (395 aa).

Positions 10-204 constitute a tr-type G domain; that stretch reads KPHVNIGTIG…VVDEYIPTPV (195 aa). Residues 19-26 are G1; it reads GHVDHGKT. Residue 19–26 coordinates GTP; it reads GHVDHGKT. Residue threonine 26 participates in Mg(2+) binding. Residues 60–64 are G2; the sequence is GITIN. A G3 region spans residues 81 to 84; it reads DAPG. GTP contacts are provided by residues 81–85 and 136–139; these read DAPGH and NKTD. Residues 136–139 are G4; that stretch reads NKTD. Residues 174 to 176 are G5; sequence SAL.

This sequence belongs to the TRAFAC class translation factor GTPase superfamily. Classic translation factor GTPase family. EF-Tu/EF-1A subfamily. As to quaternary structure, monomer.

Its subcellular location is the cytoplasm. The catalysed reaction is GTP + H2O = GDP + phosphate + H(+). Functionally, GTP hydrolase that promotes the GTP-dependent binding of aminoacyl-tRNA to the A-site of ribosomes during protein biosynthesis. The chain is Elongation factor Tu from Lactiplantibacillus plantarum (strain ATCC BAA-793 / NCIMB 8826 / WCFS1) (Lactobacillus plantarum).